Here is a 350-residue protein sequence, read N- to C-terminus: Dihydroorotate dehydrogenase (quinone) (350 aa).

FMN contacts are provided by residues 67-71 and glycine 91; that span reads AGFDK. Lysine 71 provides a ligand contact to substrate. Position 116–120 (116–120) interacts with substrate; that stretch reads NRMGL. Asparagine 144 and asparagine 177 together coordinate FMN. Position 177 (asparagine 177) interacts with substrate. Cysteine 180 serves as the catalytic Nucleophile. Residue asparagine 182 participates in substrate binding. 2 residues coordinate FMN: lysine 213 and threonine 241. 242–243 contacts substrate; it reads NT. Positions 245–265 are disordered; the sequence is TERPASLRSPNAVETGGLSGK. Residues glycine 264, glycine 291, and 312–313 each bind FMN; that span reads YT.

Belongs to the dihydroorotate dehydrogenase family. Type 2 subfamily. In terms of assembly, monomer. FMN is required as a cofactor.

It is found in the cell membrane. The enzyme catalyses (S)-dihydroorotate + a quinone = orotate + a quinol. Its pathway is pyrimidine metabolism; UMP biosynthesis via de novo pathway; orotate from (S)-dihydroorotate (quinone route): step 1/1. Catalyzes the conversion of dihydroorotate to orotate with quinone as electron acceptor. The protein is Dihydroorotate dehydrogenase (quinone) (pyrD) of Haloarcula marismortui (strain ATCC 43049 / DSM 3752 / JCM 8966 / VKM B-1809) (Halobacterium marismortui).